A 217-amino-acid chain; its full sequence is Regulator of G-protein signaling 19 (217 aa).

Residues 1–29 (MPTPHEAEKQITGPEEADRPPSMSSHDTA) form a disordered region. A phosphoserine mark is found at Ser24 and Ser97. The RGS domain maps to 90–206 (SFDKLMHSPA…LSSPTYRALL (117 aa)). Residue Ser151 is modified to Phosphoserine; by MAPK1 and MAPK3. The segment at 207-217 (LQGPSQSSSEA) is interaction with GIPC.

As to quaternary structure, interacts with GIPC PDZ domain. Interacts with GNAO1. Post-translationally, fatty acylated. Heavily palmitoylated in the cysteine string motif. Phosphorylated, mainly on serine residues. Highest expression in lung. Placenta, liver and heart also express high levels of GAIP.

It is found in the membrane. In terms of biological role, inhibits signal transduction by increasing the GTPase activity of G protein alpha subunits thereby driving them into their inactive GDP-bound form. Binds to G-alpha subfamily 1 members, with the order G(i)a3 &gt; G(i)a1 &gt; G(o)a &gt;&gt; G(z)a/G(i)a2. Activity on G(z)-alpha is inhibited by phosphorylation and palmitoylation of the G-protein. The polypeptide is Regulator of G-protein signaling 19 (RGS19) (Homo sapiens (Human)).